A 169-amino-acid chain; its full sequence is Peptide deformylase (169 aa).

Residues Cys-91 and His-133 each coordinate Fe cation. The active site involves Glu-134. His-137 is a Fe cation binding site.

It belongs to the polypeptide deformylase family. Fe(2+) is required as a cofactor.

It carries out the reaction N-terminal N-formyl-L-methionyl-[peptide] + H2O = N-terminal L-methionyl-[peptide] + formate. Removes the formyl group from the N-terminal Met of newly synthesized proteins. Requires at least a dipeptide for an efficient rate of reaction. N-terminal L-methionine is a prerequisite for activity but the enzyme has broad specificity at other positions. The chain is Peptide deformylase from Aliivibrio salmonicida (strain LFI1238) (Vibrio salmonicida (strain LFI1238)).